A 264-amino-acid chain; its full sequence is MDAAAAAGGEMSRQKATASAPPPPELDMVARAVQRLVARNDAVEALSGGGEAAAGLGAGMAAFEAARGAPAPRIGVAQYLERVHRYAGLEPECYVVAYAYVDMAAHRRPAAAVASRNVHRLLLACLLVASKVLDDFHHNNAFFARVGGVSNAEMNRLELELLAVLDFEVMLSHRVYELYREHLEKEARRDGGGGDMLAGASAAAAAKAGRMAAVSPSKLLERAAVNGAAQHDDWRSLGTAAAAEAANGVRRHRSSSSSRYSFDC.

The interval 1–25 (MDAAAAAGGEMSRQKATASAPPPPE) is disordered.

It belongs to the cyclin family. Cyclin U/P subfamily.

The protein is Cyclin-P1-1 (CYCP1-1) of Oryza sativa subsp. japonica (Rice).